The primary structure comprises 681 residues: Sodium-dependent phosphate transporter 1 (681 aa).

The next 6 helical transmembrane spans lie at Tyr25–Ala45, Ala66–Ser86, Leu106–Phe126, Ile162–Phe182, Ala207–Phe227, and Gly234–Val254. Phosphoserine occurs at positions 269 and 273. The disordered stretch occupies residues Ser269 to Ile296. The span at Leu275–Lys290 shows a compositional bias: basic and acidic residues. The next 4 helical transmembrane spans lie at Val515–Gly535, Val562–Val582, Phe604–Ile624, and Ile654–Ala674. An a region spans residues Asp554–Val562.

It belongs to the inorganic phosphate transporter (PiT) (TC 2.A.20) family.

The protein resides in the cell membrane. It catalyses the reaction 2 Na(+)(out) + phosphate(out) = 2 Na(+)(in) + phosphate(in). Sodium-phosphate symporter which preferentially transports the monovalent form of phosphate with a stoichiometry of two sodium ions per phosphate ion. May play a role in extracellular matrix and cartilage calcification as well as in vascular calcification. Essential for cell proliferation but this function is independent of its phosphate transporter activity. This chain is Sodium-dependent phosphate transporter 1 (Slc20a1), found in Felis catus (Cat).